A 321-amino-acid polypeptide reads, in one-letter code: Type 3 secretion system translocon protein SctB (321 aa).

A helical transmembrane segment spans residues 99-119; it reads AALIGGAISSVLGILGSFAAI.

This sequence belongs to the SctB/EspB family. As to quaternary structure, the core secretion machinery of the T3SS is composed of approximately 20 different proteins, including cytoplasmic components, a base, an export apparatus and a needle. This subunit is involved in the formation of a pore, called the translocon, in host membrane.

It localises to the secreted. Its subcellular location is the cell surface. The protein resides in the host membrane. Component of the type III secretion system (T3SS), also called injectisome, which is used to inject bacterial effector proteins into eukaryotic host cells. EspD and EspB are inserted into the host membrane where they form a pore and allow the translocation of effector proteins into the cytosol of target cells. Necessary for intimate attachment to epithelial cells. The polypeptide is Type 3 secretion system translocon protein SctB (Escherichia coli O127:H6 (strain E2348/69 / EPEC)).